Here is a 535-residue protein sequence, read N- to C-terminus: Succinate-semialdehyde dehydrogenase, mitochondrial (535 aa).

The transit peptide at 1–47 (MATCIWLRSCGARRLGSTFPGCRLRPRAGGLVPASGPAPGPAQLRCY) directs the protein to the mitochondrion. Residue Lys-126 is modified to N6-acetyllysine; alternate. Lys-126 is subject to N6-succinyllysine; alternate. N6-succinyllysine is present on residues Lys-135 and Lys-184. Residues Arg-213 and 228-231 (KPAE) each bind NAD(+). Residue Arg-213 participates in substrate binding. N6-acetyllysine; alternate is present on Lys-265. Residue Lys-265 is modified to N6-succinyllysine; alternate. 284–289 (GSTTTG) lines the NAD(+) pocket. The Proton acceptor role is filled by Glu-306. Arg-334 is a substrate binding site. The active-site Nucleophile is the Cys-340. A disulfide bridge connects residues Cys-340 and Cys-342. The residue at position 365 (Lys-365) is an N6-acetyllysine. Residue Lys-402 is modified to N6-succinyllysine. The residue at position 411 (Lys-411) is an N6-acetyllysine. Ser-498 contributes to the substrate binding site. Residue Ser-499 is modified to Phosphoserine.

The protein belongs to the aldehyde dehydrogenase family. Homotetramer.

It localises to the mitochondrion. It catalyses the reaction succinate semialdehyde + NAD(+) + H2O = succinate + NADH + 2 H(+). The protein operates within amino-acid degradation; 4-aminobutanoate degradation. With respect to regulation, redox-regulated. Inhibited under oxydizing conditions. In terms of biological role, catalyzes one step in the degradation of the inhibitory neurotransmitter gamma-aminobutyric acid (GABA). This Pan troglodytes (Chimpanzee) protein is Succinate-semialdehyde dehydrogenase, mitochondrial (ALDH5A1).